A 178-amino-acid polypeptide reads, in one-letter code: NADH-quinone oxidoreductase subunit B (178 aa).

The [4Fe-4S] cluster site is built by cysteine 45, cysteine 46, cysteine 111, and cysteine 140.

The protein belongs to the complex I 20 kDa subunit family. NDH-1 is composed of 15 different subunits. Subunits NuoB, C, D, E, F, and G constitute the peripheral sector of the complex. [4Fe-4S] cluster is required as a cofactor.

It is found in the cell membrane. The catalysed reaction is a quinone + NADH + 5 H(+)(in) = a quinol + NAD(+) + 4 H(+)(out). In terms of biological role, NDH-1 shuttles electrons from NADH, via FMN and iron-sulfur (Fe-S) centers, to quinones in the respiratory chain. The immediate electron acceptor for the enzyme in this species is believed to be a menaquinone. Couples the redox reaction to proton translocation (for every two electrons transferred, four hydrogen ions are translocated across the cytoplasmic membrane), and thus conserves the redox energy in a proton gradient. In Deinococcus geothermalis (strain DSM 11300 / CIP 105573 / AG-3a), this protein is NADH-quinone oxidoreductase subunit B.